Consider the following 163-residue polypeptide: uncharacterized protein (163 aa).

The disordered stretch occupies residues tryptophan 144–phenylalanine 163. Positions proline 154–phenylalanine 163 are enriched in gly residues.

This is an uncharacterized protein from Homo sapiens (Human).